A 458-amino-acid polypeptide reads, in one-letter code: NADH-quinone oxidoreductase subunit N (458 aa).

A run of 13 helical transmembrane segments spans residues 3 to 23, 29 to 49, 64 to 84, 92 to 112, 147 to 167, 188 to 208, 222 to 242, 265 to 285, 291 to 311, 320 to 340, 358 to 378, 394 to 414, and 437 to 457; these read QYLFLLPEITLFILSCLLLFL, FGLIAVLITLAATFFSQTCTS, QNVKLVILAFTCVFFIQAIAV, FSVLVLLSLLGMLLSVSSSTL, TLLGTFMSAVMIYGISLIFVV, ILLFISGLMFKVAAAPFHAWI, FFAVLPKLSLIVVLVSLISNL, NILFTSGILSIAFGTFSAFGQ, FIGFASIAHVGYMLLGVSNSA, IAYALVYSFTNLGILSVVLML, VALAFVLLLFSSAGVPPFIGF, IPTAIFSMLAGVISAFYYARI, and LLTSIVVLCALFSTFGFVLLI.

This sequence belongs to the complex I subunit 2 family. NDH-1 is composed of 14 different subunits. Subunits NuoA, H, J, K, L, M, N constitute the membrane sector of the complex.

It localises to the cell inner membrane. It catalyses the reaction a quinone + NADH + 5 H(+)(in) = a quinol + NAD(+) + 4 H(+)(out). In terms of biological role, NDH-1 shuttles electrons from NADH, via FMN and iron-sulfur (Fe-S) centers, to quinones in the respiratory chain. The immediate electron acceptor for the enzyme in this species is believed to be ubiquinone. Couples the redox reaction to proton translocation (for every two electrons transferred, four hydrogen ions are translocated across the cytoplasmic membrane), and thus conserves the redox energy in a proton gradient. The protein is NADH-quinone oxidoreductase subunit N of Neorickettsia risticii (strain Illinois).